We begin with the raw amino-acid sequence, 105 residues long: Guanidinium exporter (105 aa).

Residue Met1 is a topological domain, cytoplasmic. Residues 2 to 19 (SWIVLLIAGLLEVVWAIG) traverse the membrane as a helical segment. Residues 20–28 (LKYTHGFTR) lie on the Periplasmic side of the membrane. The chain crosses the membrane as a helical span at residues 29-48 (LTPSIITIAAMIVSIAMLSW). Residues 49–54 (AMRTLP) lie on the Cytoplasmic side of the membrane. Residues 55-77 (VGTAYAVWTGIGAVGAAITGILL) traverse the membrane as a helical segment. Over 78-86 (LGESASPAR) the chain is Periplasmic. The helical transmembrane segment at 87–104 (LLSLGLIVAGIIGLKLST) threads the bilayer. Residue His105 is a topological domain, cytoplasmic.

It belongs to the drug/metabolite transporter (DMT) superfamily. Small multidrug resistance (SMR) (TC 2.A.7.1) family. Gdx/SugE subfamily.

It localises to the cell inner membrane. Guanidinium ion exporter. Couples guanidinium export to the proton motive force, exchanging one guanidinium ion for two protons. In Citrobacter freundii, this protein is Guanidinium exporter.